A 327-amino-acid polypeptide reads, in one-letter code: G protein pathway suppressor 2 (327 aa).

A coiled-coil region spans residues 14–109; it reads MARALHRHIM…RRRKEQSDLT (96 aa). The segment at 26–65 is disordered; sequence RERKRQEEEEVDKMMEQKMKEEQERRKKKEMEERMSLEET. Glycyl lysine isopeptide (Lys-Gly) (interchain with G-Cter in SUMO1) cross-links involve residues lysine 45 and lysine 71. Positions 61-94 are interaction with SUMO; that stretch reads SLEETKEQILKLEEKLLALQEEKHQLFLQLKKVL. Disordered stretches follow at residues 177 to 208 and 253 to 327; these read HGQF…SPSQ and QKQM…FYHK. Residues 253–271 show a composition bias toward polar residues; that stretch reads QKQMEHANQQTGFSDSSSL. Arginine 312 carries the asymmetric dimethylarginine modification. Positions 317–327 are enriched in polar residues; it reads QHSQNPRFYHK. The residue at position 323 (arginine 323) is an Asymmetric dimethylarginine; alternate. Arginine 323 is subject to Omega-N-methylarginine; alternate.

Component of the N-Cor repressor complex, at least composed of NCOR1, NCOR2, HDAC3, TBL1X, TBL1R, CORO2A and GPS2. Interacts (when sumoylated at Lys-71) with TBL1X; leading to protect GPS2 from degradation by the proteasome. Interacts with UBE2N; leading to inhibit UBE2N/Ubc13 activity. Interacts with TRAF1. Interacts with TRAF2. Interacts with TRAF6. Interacts with PPARG (when in the liganded conformation). Interacts with (sumoylated) NR1H2; interaction with sumoylated NR1H2 and NR5A2 onto hepatic acute phase protein promoters prevents N-Cor corepressor complex dissociation. Interacts with (sumoylated) NR5A2; interaction with sumoylated NR1H2 and NR5A2 onto hepatic acute phase protein promoters prevents N-Cor corepressor complex dissociation. Interacts with NR1H3. Interacts with RFX4. Interacts with ANKRD26. As to quaternary structure, (Microbial infection) Interacts (via coiled coil domain) with hepatitis C virus (HCV) NS5A. In terms of processing, sumoylation regulates its subcellular location. Sumoylation at Lys-45 and Lys-71 regulates the shuttling between the cytoplasm and the nucleus. Sumoylation at Lys-71 is required for interaction with TBL1X. Sumoylated at Lys-45 and Lys-71 in mitochondrion. Desumoylation by SENP1 leads to relocation from the mitochondria to the nucleus. Post-translationally, ubiquitinated at the C-terminus by SIAH2; leading to its degradation by the proteasome. Interaction with TBL1X and methylation at Arg-323 protect GPS2 against ubiquitination and degradation. Methylated at Arg-312 and Arg-323 by PRMT6. Methylation at Arg-323 protects from degradation by the proteasome. In terms of tissue distribution, widely expressed.

The protein localises to the nucleus. Its subcellular location is the mitochondrion. It is found in the cytoplasm. The protein resides in the cytosol. Functionally, key regulator of inflammation, lipid metabolism and mitochondrion homeostasis that acts by inhibiting the activity of the ubiquitin-conjugating enzyme UBE2N/Ubc13, thereby inhibiting 'Lys-63'-linked ubiquitination. In the nucleus, can both acts as a corepressor and coactivator of transcription, depending on the context. Acts as a transcription coactivator in adipocytes by promoting the recruitment of PPARG to promoters: acts by inhibiting the activity of the ubiquitin-conjugating enzyme UBE2N/Ubc13, leading to stabilization of KDM4A and subsequent histone H3 'Lys-9' (H3K9) demethylation. Promotes cholesterol efflux by acting as a transcription coactivator. Acts as a regulator of B-cell development by inhibiting UBE2N/Ubc13, thereby restricting the activation of Toll-like receptors (TLRs) and B-cell antigen receptors (BCRs) signaling pathways. Acts as a key mediator of mitochondrial stress response: in response to mitochondrial depolarization, relocates from the mitochondria to the nucleus following desumoylation and specifically promotes expression of nuclear-encoded mitochondrial genes. Promotes transcription of nuclear-encoded mitochondrial genes by inhibiting UBE2N/Ubc13. Can also act as a corepressor as part of the N-Cor repressor complex by repressing active PPARG. Plays an anti-inflammatory role in macrophages and is required for insulin sensitivity by acting as a corepressor. Plays an anti-inflammatory role during the hepatic acute phase response by interacting with sumoylated NR1H2 and NR5A2 proteins, thereby preventing N-Cor corepressor complex dissociation. In the cytosol, also plays a non-transcriptional role by regulating insulin signaling and pro-inflammatory pathways. In the cytoplasm, acts as a negative regulator of inflammation by inhibiting the pro-inflammatory TNF-alpha pathway; acts by repressing UBE2N/Ubc13 activity. In the cytoplasm of adipocytes, restricts the activation of insulin signaling via inhibition of UBE2N/Ubc13-mediated ubiquitination of AKT. Able to suppress G-protein- and mitogen-activated protein kinase-mediated signal transduction. Acts as a tumor-suppressor in liposarcoma. (Microbial infection) Required for efficient replication of hepatitis C virus (HCV) by promoting the interaction between VAPA and HCV virus protein NS5A. This chain is G protein pathway suppressor 2, found in Homo sapiens (Human).